Here is a 47-residue protein sequence, read N- to C-terminus: Lysis protein for colicin E7 (47 aa).

An N-terminal signal peptide occupies residues 1–19 (MKKITGIILLLLAAIILAA). Residue C20 is the site of N-palmitoyl cysteine attachment. C20 carries the S-diacylglycerol cysteine lipid modification.

It localises to the cell outer membrane. In terms of biological role, lysis proteins are required for both colicin release and partial cell lysis. This is Lysis protein for colicin E7 (lys) from Escherichia coli.